We begin with the raw amino-acid sequence, 357 residues long: MNDKSSKAAASEKAKALAAALSQIEKQFGKGSIMRYGDNEVEHDIQVVSTGSLGLDIALGVGGLPRGRVIEIYGPESSGKTTLTLQVIAEMQKIGGTCAFVDAEHALDVQYAAKLGVNLTDLLISQPDTGEQALEITDALVRSGSVDLIVIDSVAALVPKAEIEGEMGDSLPGLQARLMSQALRKLTATIKRTNCMVIFINQIRMKIGVMFGNPETTTGGNALKFYSSVRLDIRRIGSIKKGEEVVGNETRVKVVKNKVSPPFKQAEFDIMYGAGISREGEIIDLGVQAGVVDKSGAWYSYSGTRIGQGKDNVREYLKEHPELAVEIENKVRENQGIVSRAATFPASEAEAEDDGQA.

74–81 (GPESSGKT) contacts ATP.

Belongs to the RecA family.

The protein localises to the cytoplasm. Its function is as follows. Can catalyze the hydrolysis of ATP in the presence of single-stranded DNA, the ATP-dependent uptake of single-stranded DNA by duplex DNA, and the ATP-dependent hybridization of homologous single-stranded DNAs. It interacts with LexA causing its activation and leading to its autocatalytic cleavage. The chain is Protein RecA from Bordetella petrii (strain ATCC BAA-461 / DSM 12804 / CCUG 43448).